We begin with the raw amino-acid sequence, 81 residues long: Large ribosomal subunit protein bL31B (81 aa).

Belongs to the bacterial ribosomal protein bL31 family. Type B subfamily. Part of the 50S ribosomal subunit.

In Limosilactobacillus fermentum (strain NBRC 3956 / LMG 18251) (Lactobacillus fermentum), this protein is Large ribosomal subunit protein bL31B.